A 520-amino-acid polypeptide reads, in one-letter code: Phospholipase C A (520 aa).

The segment at residues 1-38 (MSASPLLGMSRREFLTKLTGAGAAAFLMDWAAPVIEKA) is a signal peptide (tat-type signal).

Belongs to the bacterial phospholipase C family. Predicted to be exported by the Tat system. The position of the signal peptide cleavage has not been experimentally proven.

It localises to the secreted. It is found in the cell wall. It carries out the reaction a 1,2-diacyl-sn-glycero-3-phosphocholine + H2O = phosphocholine + a 1,2-diacyl-sn-glycerol + H(+). In terms of biological role, involved in virulence. Induces cytotoxic effects on mouse macrophage cell lines, via direct or indirect enzymatic hydrolysis of cell membrane phospholipids. Hydrolyzes phosphatidylcholine. This is Phospholipase C A from Mycobacterium tuberculosis (strain CDC 1551 / Oshkosh).